A 286-amino-acid chain; its full sequence is 4-diphosphocytidyl-2-C-methyl-D-erythritol kinase (286 aa).

The active site involves Lys11. 94–104 (PMGGGIGGGSS) contacts ATP. Asp136 is an active-site residue.

This sequence belongs to the GHMP kinase family. IspE subfamily.

The enzyme catalyses 4-CDP-2-C-methyl-D-erythritol + ATP = 4-CDP-2-C-methyl-D-erythritol 2-phosphate + ADP + H(+). It participates in isoprenoid biosynthesis; isopentenyl diphosphate biosynthesis via DXP pathway; isopentenyl diphosphate from 1-deoxy-D-xylulose 5-phosphate: step 3/6. Its function is as follows. Catalyzes the phosphorylation of the position 2 hydroxy group of 4-diphosphocytidyl-2C-methyl-D-erythritol. This Pseudomonas putida (strain ATCC 700007 / DSM 6899 / JCM 31910 / BCRC 17059 / LMG 24140 / F1) protein is 4-diphosphocytidyl-2-C-methyl-D-erythritol kinase.